We begin with the raw amino-acid sequence, 225 residues long: Small ribosomal subunit protein uS3 (225 aa).

The KH type-2 domain occupies 16–85 (VCEYVVKETE…TPQIEVKDVK (70 aa)). Positions 202–225 (EVGTESKADQTDVEGRETGNAEES) are disordered. Residues 205–225 (TESKADQTDVEGRETGNAEES) are compositionally biased toward basic and acidic residues.

Belongs to the universal ribosomal protein uS3 family. In terms of assembly, part of the 30S ribosomal subunit.

In terms of biological role, binds the lower part of the 30S subunit head. This chain is Small ribosomal subunit protein uS3, found in Thermoplasma acidophilum (strain ATCC 25905 / DSM 1728 / JCM 9062 / NBRC 15155 / AMRC-C165).